A 141-amino-acid chain; its full sequence is Glutamyl-tRNA(Gln) amidotransferase subunit C, chloroplastic/mitochondrial (141 aa).

It belongs to the GatC family. As to quaternary structure, subunit of the heterotrimeric GatCAB amidotransferase (AdT) complex, composed of A, B and C subunits.

It localises to the mitochondrion. The protein resides in the plastid. The protein localises to the chloroplast. It catalyses the reaction L-glutamyl-tRNA(Gln) + L-glutamine + ATP + H2O = L-glutaminyl-tRNA(Gln) + L-glutamate + ADP + phosphate + H(+). Functionally, allows the formation of correctly charged Gln-tRNA(Gln) through the transamidation of misacylated Glu-tRNA(Gln) in chloroplasts and mitochondria. The reaction takes place in the presence of glutamine and ATP through an activated gamma-phospho-Glu-tRNA(Gln). The protein is Glutamyl-tRNA(Gln) amidotransferase subunit C, chloroplastic/mitochondrial of Populus trichocarpa (Western balsam poplar).